Reading from the N-terminus, the 214-residue chain is pH-sensitive calcium channel (214 aa).

At 1-15 the chain is on the cytoplasmic side; that stretch reads MQATVHESKQSIMQR. A helical transmembrane segment spans residues 16-37; the sequence is ILTVFVFTLLIATVGLFIGQFV. At 38-44 the chain is on the extracellular side; it reads PVALMLP. A helical transmembrane segment spans residues 45–59; sequence LSILEVAMIILAFWM. The Cytoplasmic segment spans residues 60–66; sequence RRRKAVG. Residues 67–86 traverse the membrane as a helical segment; it reads YAFVYTFAFVSGITLFPIVS. The Extracellular portion of the chain corresponds to 87 to 95; the sequence is HYASIAGAY. The helical transmembrane segment at 96 to 117 threads the bilayer; that stretch reads VVLEAFGSTFVIFAVLGTIGAK. Topologically, residues 118–122 are cytoplasmic; that stretch reads MKKDL. The helical transmembrane segment at 123-146 threads the bilayer; that stretch reads SFLWSFLLVAVLALAVVGIFNIFS. At 147 to 151 the chain is on the extracellular side; that stretch reads PLNSA. Residues 152–175 form a helical membrane-spanning segment; that stretch reads AMMAYSVIGTIVFSLYILYDLNQI. The Cytoplasmic portion of the chain corresponds to 176 to 185; the sequence is KHRHITEDLI. Residues 186-207 form a helical membrane-spanning segment; that stretch reads PVMALSLYLDFINLFINLLRFF. At 208–214 the chain is on the extracellular side; the sequence is GILSSDD.

It belongs to the BI1 family. In terms of assembly, monomer.

It is found in the cell membrane. The enzyme catalyses Ca(2+)(in) = Ca(2+)(out). Its activity is regulated as follows. The calcium-release activity is mediated by two factors: pH and transmembrane ion gradient. It was proposed, based on an MD simulation, that the conserved aspartyl dyad (Asp-171-Asp-195) regulates Ca(2+) binding, pH sensing, and the channel pore opening and closing, and that protonation of Asp-171 probably weakens its interaction with Arg-60, facilitating the opening of the channel. Another study using nanodiscs suggests that Asp-171 is not a pH sensor regulating the pore dynamics; instead, it is only involved in the gating of calcium ions. When crystallized in detergents at different pH conditions, the transition between open and closed conformations is regulated by pH. Ca(2+) binding is inhibited by Na(+), K(+), Li(+), Yb(3+) and Lu(3+), but not by Mg(2+) and Mn(2+). In terms of biological role, calcium channel that probably plays a role in the regulation of calcium homeostasis. Uptakes calcium ions and mediates calcium flux in proteoliposomes in a pH-dependent manner. When expressed in E.coli in the presence of high extracellular calcium concentrations, shows calcium-leak activity, increasing intracellular calcium concentration. It can also mediate Ca(2+) flux from the endoplamic reticulum (ER) when expressed in permeabilized mammalian cells. Calcium transport activity is also detected in ER-like lipid vesicles. The sequence is that of pH-sensitive calcium channel from Bacillus subtilis (strain 168).